Reading from the N-terminus, the 127-residue chain is uncharacterized protein (127 aa).

In terms of domain architecture, VOC spans methionine 1–lysine 127.

Belongs to the glyoxalase I family.

This is an uncharacterized protein from Bacillus subtilis (strain 168).